The sequence spans 155 residues: Small ribosomal subunit protein uS7cz/uS7cy (155 aa).

The protein belongs to the universal ribosomal protein uS7 family. In terms of assembly, part of the 30S ribosomal subunit.

It localises to the plastid. Its subcellular location is the chloroplast. One of the primary rRNA binding proteins, it binds directly to 16S rRNA where it nucleates assembly of the head domain of the 30S subunit. This Crucihimalaya wallichii (Rock-cress) protein is Small ribosomal subunit protein uS7cz/uS7cy (rps7-A).